The chain runs to 447 residues: Argininosuccinate synthase (447 aa).

Residues 17 to 25 and alanine 43 contribute to the ATP site; that span reads AFSGGLDTS. L-citrulline is bound at residue tyrosine 99. Positions 129 and 131 each coordinate ATP. Residues threonine 131, asparagine 135, and aspartate 136 each contribute to the L-aspartate site. An L-citrulline-binding site is contributed by asparagine 135. Residue aspartate 136 participates in ATP binding. Arginine 139 and serine 192 together coordinate L-citrulline. Aspartate 194 is a binding site for ATP. L-citrulline contacts are provided by threonine 201, glutamate 203, and glutamate 280.

The protein belongs to the argininosuccinate synthase family. Type 2 subfamily. Homotetramer.

The protein resides in the cytoplasm. It catalyses the reaction L-citrulline + L-aspartate + ATP = 2-(N(omega)-L-arginino)succinate + AMP + diphosphate + H(+). It functions in the pathway amino-acid biosynthesis; L-arginine biosynthesis; L-arginine from L-ornithine and carbamoyl phosphate: step 2/3. This Citrobacter koseri (strain ATCC BAA-895 / CDC 4225-83 / SGSC4696) protein is Argininosuccinate synthase.